A 525-amino-acid polypeptide reads, in one-letter code: Nuclear pore glycoprotein p62 (525 aa).

An N-acetylserine modification is found at Ser2. A run of 5 repeats spans residues 6 to 7 (FG), 46 to 47 (FG), 78 to 79 (FG), 115 to 116 (FG), and 143 to 144 (FG). The interval 6–144 (FGGTGAPAGG…GTAPTGFVFG (139 aa)) is 5 X 2 AA repeats of F-G. The segment at 260-293 (LKAPGAAPGASTTSTTTTTTTTTTTASTSSSTTT) is disordered. A compositionally biased stretch (low complexity) spans 269 to 293 (ASTTSTTTTTTTTTTTASTSSSTTT). The tract at residues 331–461 (MTYAQLESLI…QDLKDIIEHL (131 aa)) is required for centrosome localization. The stretch at 331–461 (MTYAQLESLI…QDLKDIIEHL (131 aa)) forms a coiled coil. 2 positions are modified to phosphoserine: Ser411 and Ser421. An O-linked (GlcNAc) serine glycan is attached at Ser471.

The protein belongs to the nucleoporin NSP1/NUP62 family. As to quaternary structure, component of the p62 complex, a complex at least composed of NUP62, NUP54, and NUP58. Interacts with NUP88. Interacts with NUTF2. Interacts with HIKESHI. Interacts with OSBPL8. Interacts with CAPG. Interacts with SAS6 and TUBG1 at the centrosome. Interacts with MCM3AP. The inner channel of the NPC has a different redox environment from the cytoplasm and allows the formation of interchain disulfide bonds between some nucleoporins, the significant increase of these linkages upon oxidative stress reduces the permeability of the NPC.

The protein localises to the nucleus. It localises to the nuclear pore complex. The protein resides in the cytoplasm. Its subcellular location is the cytoskeleton. It is found in the spindle pole. The protein localises to the nucleus envelope. It localises to the microtubule organizing center. The protein resides in the centrosome. Functionally, essential component of the nuclear pore complex. The N-terminal is probably involved in nucleocytoplasmic transport. The C-terminal is involved in protein-protein interaction probably via coiled-coil formation, promotes its association with centrosomes and may function in anchorage of p62 to the pore complex. Plays a role in mitotic cell cycle progression by regulating centrosome segregation, centriole maturation and spindle orientation. It might be involved in protein recruitment to the centrosome after nuclear breakdown. The sequence is that of Nuclear pore glycoprotein p62 (Nup62) from Rattus norvegicus (Rat).